The primary structure comprises 184 residues: Gremlin-1 (184 aa).

An N-terminal signal peptide occupies residues 1 to 24 (MNRTAYTVGALLLLLGTLLPAAEG). Residues Asn2 and Asn42 are each glycosylated (N-linked (GlcNAc...) asparagine). The tract at residues 24-78 (GKKKGSQGAIPPPDKAQHNDSEQTQSPPQPGSRTRGRGQGRGTAMPGEEVLESSQ) is disordered. 4 cysteine pairs are disulfide-bonded: Cys94-Cys144, Cys108-Cys158, Cys118-Cys176, and Cys122-Cys178. The 91-residue stretch at 94 to 184 (CKTQPLKQTI…QCRCISIDLD (91 aa)) folds into the CTCK domain.

The protein belongs to the DAN family. As to quaternary structure, homodimer; can also form homooligomers. Interacts with BMP2; can form higher oligomers with BMP2. Interacts with SLIT1 and SLIT2 in a glycosylation-dependent manner. Highly expressed in the brain, kidney, spleen, and testis and weakly expressed in the lung and liver. Predominantly expressed in differentiated cells as neurons in brain, type I cells in lung and globlet cells in intestine.

The protein localises to the secreted. In terms of biological role, cytokine that may play an important role during carcinogenesis and metanephric kidney organogenesis, as a BMP antagonist required for early limb outgrowth and patterning in maintaining the FGF4-SHH feedback loop. Down-regulates the BMP4 signaling in a dose-dependent manner. Antagonist of BMP2; inhibits BMP2-mediated differentiation of osteoblasts (in vitro). Acts as inhibitor of monocyte chemotaxis. Can inhibit the growth or viability of normal cells but not transformed cells when is overexpressed. The sequence is that of Gremlin-1 (Grem1) from Rattus norvegicus (Rat).